Here is a 110-residue protein sequence, read N- to C-terminus: DNA-binding protein Pars_1791 (110 aa).

The protein belongs to the PDCD5 family.

This Pyrobaculum arsenaticum (strain DSM 13514 / JCM 11321 / PZ6) protein is DNA-binding protein Pars_1791.